Here is a 123-residue protein sequence, read N- to C-terminus: Small ribosomal subunit protein uS13 (123 aa).

The interval 95–123 (GLPVRGQRTKTNARTRKGPIKTVGAKRKK) is disordered.

Belongs to the universal ribosomal protein uS13 family. As to quaternary structure, part of the 30S ribosomal subunit. Forms a loose heterodimer with protein S19. Forms two bridges to the 50S subunit in the 70S ribosome.

Functionally, located at the top of the head of the 30S subunit, it contacts several helices of the 16S rRNA. In the 70S ribosome it contacts the 23S rRNA (bridge B1a) and protein L5 of the 50S subunit (bridge B1b), connecting the 2 subunits; these bridges are implicated in subunit movement. Contacts the tRNAs in the A and P-sites. The protein is Small ribosomal subunit protein uS13 of Desulfitobacterium hafniense (strain DSM 10664 / DCB-2).